The primary structure comprises 178 residues: PRA1 family protein 2 (178 aa).

The Cytoplasmic portion of the chain corresponds to 1 to 41; sequence MSEVRLPPLRALDDFVLGSARLAAPDPCDPQRWCHRVINNL. Residues 42 to 62 form a helical membrane-spanning segment; it reads LYYQTNYLLCFGIGLALAGYV. At 63 to 64 the chain is on the extracellular side; sequence RP. Residues 65–85 form a helical membrane-spanning segment; that stretch reads LHTLLSALVVAVALGMLVWAA. Topologically, residues 86-96 are cytoplasmic; the sequence is ETRAAVRRCRR. The helical transmembrane segment at 97 to 119 threads the bilayer; sequence SHPAACLAAVLAVGLLVLWVVGG. Residues 120–122 lie on the Extracellular side of the membrane; sequence ACT. Residues 123–140 form a helical membrane-spanning segment; that stretch reads FLLSIAGPVLLILVHASL. Over 141 to 178 the chain is Cytoplasmic; sequence RLRNLKNKIENKIESIGLKRTPMGLLLEALGQEQEAGS.

It belongs to the PRA1 family. Interacts with CCR5 and GDE1.

It is found in the endosome membrane. May be involved in ER/Golgi transport and vesicular traffic. Plays a proapoptotic role in cerulenin-induced neuroblastoma apoptosis. The polypeptide is PRA1 family protein 2 (PRAF2) (Macaca fascicularis (Crab-eating macaque)).